A 255-amino-acid polypeptide reads, in one-letter code: ATP synthase subunit a (255 aa).

The propeptide at methionine 1–isoleucine 7 is removed in mature form. 6 helical membrane passes run phenylalanine 35–tyrosine 55, tyrosine 91–isoleucine 111, histidine 120–phenylalanine 140, phenylalanine 147–isoleucine 167, valine 177–leucine 197, and glycine 208–leucine 228.

It belongs to the ATPase A chain family. As to quaternary structure, F-type ATPases have 2 components, CF(1) - the catalytic core - and CF(0) - the membrane proton channel. CF(1) has five subunits: alpha(3), beta(3), gamma(1), delta(1), epsilon(1). CF(0) has three main subunits: a, b and c.

The protein resides in the mitochondrion inner membrane. In terms of biological role, mitochondrial membrane ATP synthase (F(1)F(0) ATP synthase or Complex V) produces ATP from ADP in the presence of a proton gradient across the membrane which is generated by electron transport complexes of the respiratory chain. F-type ATPases consist of two structural domains, F(1) - containing the extramembraneous catalytic core and F(0) - containing the membrane proton channel, linked together by a central stalk and a peripheral stalk. During catalysis, ATP synthesis in the catalytic domain of F(1) is coupled via a rotary mechanism of the central stalk subunits to proton translocation. Key component of the proton channel; it may play a direct role in the translocation of protons across the membrane. The protein is ATP synthase subunit a (ATP6) of Trichophyton rubrum (Athlete's foot fungus).